The following is an 865-amino-acid chain: Leucine--tRNA ligase (865 aa).

Positions 58-68 match the 'HIGH' region motif; sequence PYPSGNLHMGH. The short motif at 629–633 is the 'KMSKS' region element; sequence KMSKS. Position 632 (Lys-632) interacts with ATP.

This sequence belongs to the class-I aminoacyl-tRNA synthetase family.

It localises to the cytoplasm. It carries out the reaction tRNA(Leu) + L-leucine + ATP = L-leucyl-tRNA(Leu) + AMP + diphosphate. The sequence is that of Leucine--tRNA ligase from Synechococcus elongatus (strain ATCC 33912 / PCC 7942 / FACHB-805) (Anacystis nidulans R2).